A 530-amino-acid chain; its full sequence is Feruloyl esterase C (530 aa).

The first 25 residues, 1–25 (MMLTSAILLLTLGVQLSHADDSSRE), serve as a signal peptide directing secretion. Cystine bridges form between Cys-31–Cys-78, Cys-66–Cys-117, Cys-190–Cys-444, Cys-259–Cys-276, Cys-285–Cys-294, and Cys-506–Cys-528. Catalysis depends on Ser-191, which acts as the Acyl-ester intermediate. Asp-260, Asp-263, Ala-265, Asp-267, and Val-269 together coordinate Ca(2+). Catalysis depends on charge relay system residues Asp-403 and His-443.

The protein belongs to the tannase family.

It localises to the secreted. The enzyme catalyses feruloyl-polysaccharide + H2O = ferulate + polysaccharide.. Its function is as follows. Involved in degradation of plant cell walls. Hydrolyzes the feruloyl-arabinose ester bond in arabinoxylans as well as the feruloyl-galactose and feruloyl-arabinose ester bonds in pectin. Active against methyl esters of sinapate (MSA) and caffeate (MCA). This chain is Feruloyl esterase C (faeC), found in Talaromyces stipitatus (strain ATCC 10500 / CBS 375.48 / QM 6759 / NRRL 1006) (Penicillium stipitatum).